We begin with the raw amino-acid sequence, 246 residues long: 1-(5-phosphoribosyl)-5-[(5-phosphoribosylamino)methylideneamino] imidazole-4-carboxamide isomerase (246 aa).

The Proton acceptor role is filled by Asp-8. Asp-131 acts as the Proton donor in catalysis.

It belongs to the HisA/HisF family.

The protein resides in the cytoplasm. It carries out the reaction 1-(5-phospho-beta-D-ribosyl)-5-[(5-phospho-beta-D-ribosylamino)methylideneamino]imidazole-4-carboxamide = 5-[(5-phospho-1-deoxy-D-ribulos-1-ylimino)methylamino]-1-(5-phospho-beta-D-ribosyl)imidazole-4-carboxamide. The protein operates within amino-acid biosynthesis; L-histidine biosynthesis; L-histidine from 5-phospho-alpha-D-ribose 1-diphosphate: step 4/9. The chain is 1-(5-phosphoribosyl)-5-[(5-phosphoribosylamino)methylideneamino] imidazole-4-carboxamide isomerase from Lactococcus lactis subsp. cremoris (strain MG1363).